A 273-amino-acid chain; its full sequence is 4-hydroxy-tetrahydrodipicolinate reductase 1 (273 aa).

NAD(+) contacts are provided by residues 13 to 18 and glutamate 39; that span reads GAAGRM. Arginine 40 serves as a coordination point for NADP(+). Residues 103–105 and 127–130 contribute to the NAD(+) site; these read GTT and SGNM. The Proton donor/acceptor role is filled by histidine 161. Residue histidine 162 coordinates (S)-2,3,4,5-tetrahydrodipicolinate. Lysine 165 acts as the Proton donor in catalysis. Position 171–172 (171–172) interacts with (S)-2,3,4,5-tetrahydrodipicolinate; the sequence is GT.

The protein belongs to the DapB family.

The protein localises to the cytoplasm. The enzyme catalyses (S)-2,3,4,5-tetrahydrodipicolinate + NAD(+) + H2O = (2S,4S)-4-hydroxy-2,3,4,5-tetrahydrodipicolinate + NADH + H(+). It catalyses the reaction (S)-2,3,4,5-tetrahydrodipicolinate + NADP(+) + H2O = (2S,4S)-4-hydroxy-2,3,4,5-tetrahydrodipicolinate + NADPH + H(+). It participates in amino-acid biosynthesis; L-lysine biosynthesis via DAP pathway; (S)-tetrahydrodipicolinate from L-aspartate: step 4/4. In terms of biological role, catalyzes the conversion of 4-hydroxy-tetrahydrodipicolinate (HTPA) to tetrahydrodipicolinate. This is 4-hydroxy-tetrahydrodipicolinate reductase 1 from Mesorhizobium japonicum (strain LMG 29417 / CECT 9101 / MAFF 303099) (Mesorhizobium loti (strain MAFF 303099)).